A 279-amino-acid chain; its full sequence is Putative pyruvate, phosphate dikinase regulatory protein (279 aa).

152-159 (GVSRTSKS) is an ADP binding site.

It belongs to the pyruvate, phosphate/water dikinase regulatory protein family. PDRP subfamily.

It carries out the reaction N(tele)-phospho-L-histidyl/L-threonyl-[pyruvate, phosphate dikinase] + ADP = N(tele)-phospho-L-histidyl/O-phospho-L-threonyl-[pyruvate, phosphate dikinase] + AMP + H(+). The enzyme catalyses N(tele)-phospho-L-histidyl/O-phospho-L-threonyl-[pyruvate, phosphate dikinase] + phosphate + H(+) = N(tele)-phospho-L-histidyl/L-threonyl-[pyruvate, phosphate dikinase] + diphosphate. Functionally, bifunctional serine/threonine kinase and phosphorylase involved in the regulation of the pyruvate, phosphate dikinase (PPDK) by catalyzing its phosphorylation/dephosphorylation. This Anaplasma marginale (strain St. Maries) protein is Putative pyruvate, phosphate dikinase regulatory protein.